The following is a 270-amino-acid chain: 2-dehydro-3-deoxyphosphooctonate aldolase (270 aa).

Belongs to the KdsA family.

The protein resides in the cytoplasm. It catalyses the reaction D-arabinose 5-phosphate + phosphoenolpyruvate + H2O = 3-deoxy-alpha-D-manno-2-octulosonate-8-phosphate + phosphate. It participates in carbohydrate biosynthesis; 3-deoxy-D-manno-octulosonate biosynthesis; 3-deoxy-D-manno-octulosonate from D-ribulose 5-phosphate: step 2/3. Its pathway is bacterial outer membrane biogenesis; lipopolysaccharide biosynthesis. This is 2-dehydro-3-deoxyphosphooctonate aldolase from Helicobacter hepaticus (strain ATCC 51449 / 3B1).